The chain runs to 287 residues: 2-dehydro-3-deoxyphosphooctonate aldolase (287 aa).

The protein belongs to the KdsA family.

It localises to the cytoplasm. It carries out the reaction D-arabinose 5-phosphate + phosphoenolpyruvate + H2O = 3-deoxy-alpha-D-manno-2-octulosonate-8-phosphate + phosphate. It participates in carbohydrate biosynthesis; 3-deoxy-D-manno-octulosonate biosynthesis; 3-deoxy-D-manno-octulosonate from D-ribulose 5-phosphate: step 2/3. It functions in the pathway bacterial outer membrane biogenesis; lipopolysaccharide biosynthesis. The polypeptide is 2-dehydro-3-deoxyphosphooctonate aldolase (Leptospira interrogans serogroup Icterohaemorrhagiae serovar copenhageni (strain Fiocruz L1-130)).